The sequence spans 1250 residues: MDTDYESTYEDDSQVPNDDVVPYSDDETDDELDSPQTDEPEQNRRNVQAEQSREPVIKECTWQVKANDRNFYDQPEFKKKVFLCLKKSKYAGNAIKTYKYNPITFLPVNLYEQFKRAANAYFLVLLILQTIPQISTVTWSTTLIPLLLVLGITAIKDLVDDIARHKMDNEINNRPSEVITDGRFKKTKWKHIHVGDIIRINKNEFVPADVLLLSSSDPNSLCYVETAELDGETNLKFKMSLEITDKLLQKEEQLAGFDGLVECEEPNNRLDKFVGTLFWRGNSFGLDADKILLRGCTVRNTEYCHGLVLFAGADTKIMRNSGKTRLKRTKIDYLMNYMVYTIFVLLILAAAGLAIGQTFWEAKLGAANVSWYLYDGNNYSPSYRGFLAFWGYIIVLNTMVPISLYVSVEVIRLGQSYFINWDLQMYFSPKDTPAKARTTTLNEQLGQIQYIFSDKTGTLTQNIMTFKKCTINGTTYGDDDDELKSGQTKQVDFSWNPLADPSFTFHDNYLIEQIRAGKDKDVYEFFKLLALCHTVMAEKTDGELIYQAASPDEGALVTAARNFGFVFLSRTQSTITISELGQEKTYEVLAILDFNSDRKRMSIIVRQPDGRIRLYCKGADTVIYERLHPDNPIKDQTQKALDIFANASLRTLCLCYKDINKGDFENWSKKYKQASVATSNRDEALDRVYEAIETDLKLLGATAIEDKLQDDVSGTIFNLARADIKIWVLTGDKKETAENIGYSCKLLDDDTEILYGEDINVHLQTRMENQRNQMSGNQGAQSNQSGAFLPTDKKHALIITGSWLNEILLEKKKRKKKRLKLKFPRTKEEKEQQLHEKLKAYALKEQRQRSFVDLACECSAVICCRVTPKQKAMVVDLVKRYKKAVTLAIGDGANDVNMIKTAHIGVGISGQEGMQAVMSSDYSFAQFRYLQRLLLVHGRWSYIRMCKFLRYFFYKNFSFTLVHFWYSFFNGFSAQTVYEDWFITLYNVLYSSLPVLLVGLLDQDVSDKLSLAFPRLYVPGQKDLLFNYKKFFLSLFHGIVTSLIIFFIPYGAFLLTMGQDGEAPSDYQSFAVTTATALVITVNFQIGLDTSYWTFVNAFSIFGSIAIYFGIMFDLHSAGIHVLFPSMFIFTGAAPNALRQPYLWLTIILTVAFCLLPIVALRFLAKTIWPSESDKIQKKGKKFKAEVEQRAKPKPFARGVSTRRSAYAFSHQRGYADLISSGRSIRKKRASLDAVFDNYPAQITHFTPQT.

Acidic residues-rich tracts occupy residues 1–13 and 24–40; these read MDTD…EDDS and SDDE…TDEP. The segment at 1–52 is disordered; sequence MDTDYESTYEDDSQVPNDDVVPYSDDETDDELDSPQTDEPEQNRRNVQAEQS. Topologically, residues 1–133 are cytoplasmic; sequence MDTDYESTYE…VLLILQTIPQ (133 aa). Residues 134 to 154 form a helical membrane-spanning segment; sequence ISTVTWSTTLIPLLLVLGITA. Over 155–338 the chain is Exoplasmic loop; the sequence is IKDLVDDIAR…TKIDYLMNYM (184 aa). A helical transmembrane segment spans residues 339–359; sequence VYTIFVLLILAAAGLAIGQTF. Over 360–385 the chain is Cytoplasmic; the sequence is WEAKLGAANVSWYLYDGNNYSPSYRG. Residues 386–406 traverse the membrane as a helical segment; the sequence is FLAFWGYIIVLNTMVPISLYV. The Exoplasmic loop segment spans residues 407–956; it reads SVEVIRLGQS…KFLRYFFYKN (550 aa). D454 serves as the catalytic 4-aspartylphosphate intermediate. D454, K455, T456, E553, F594, K617, R650, T730, G731, D732, R865, and K871 together coordinate ATP. Position 454 (D454) interacts with Mg(2+). T456 serves as a coordination point for Mg(2+). Position 891 (D891) interacts with Mg(2+). ATP is bound by residues N894 and D895. D895 provides a ligand contact to Mg(2+). The helical transmembrane segment at 957-977 threads the bilayer; it reads FSFTLVHFWYSFFNGFSAQTV. At 978-980 the chain is on the cytoplasmic side; sequence YED. A helical membrane pass occupies residues 981–1001; the sequence is WFITLYNVLYSSLPVLLVGLL. The Exoplasmic loop portion of the chain corresponds to 1002 to 1034; that stretch reads DQDVSDKLSLAFPRLYVPGQKDLLFNYKKFFLS. Residues 1035–1055 form a helical membrane-spanning segment; that stretch reads LFHGIVTSLIIFFIPYGAFLL. Residues 1056–1069 lie on the Cytoplasmic side of the membrane; sequence TMGQDGEAPSDYQS. A helical membrane pass occupies residues 1070–1090; it reads FAVTTATALVITVNFQIGLDT. Residues 1091 to 1092 are Exoplasmic loop-facing; the sequence is SY. A helical transmembrane segment spans residues 1093 to 1113; the sequence is WTFVNAFSIFGSIAIYFGIMF. Topologically, residues 1114 to 1117 are cytoplasmic; that stretch reads DLHS. The chain crosses the membrane as a helical span at residues 1118 to 1138; that stretch reads AGIHVLFPSMFIFTGAAPNAL. The Exoplasmic loop portion of the chain corresponds to 1139-1140; that stretch reads RQ. A helical transmembrane segment spans residues 1141-1161; it reads PYLWLTIILTVAFCLLPIVAL. Residues 1162–1250 lie on the Cytoplasmic side of the membrane; sequence RFLAKTIWPS…AQITHFTPQT (89 aa).

Belongs to the cation transport ATPase (P-type) (TC 3.A.3) family. Type IV subfamily. In terms of assembly, component of a P4-ATPase flippase complex which consists of a catalytic alpha subunit and an accessory beta subunit. The flippase ATP8B1:TMEM30A complex can form an intermediate phosphoenzyme in vitro. Also interacts with beta subunit TMEM30B. Mg(2+) serves as cofactor.

Its subcellular location is the cell membrane. It localises to the apical cell membrane. The protein localises to the cell projection. It is found in the stereocilium. The protein resides in the endoplasmic reticulum. Its subcellular location is the golgi apparatus. The enzyme catalyses ATP + H2O + phospholipidSide 1 = ADP + phosphate + phospholipidSide 2.. It carries out the reaction a 1,2-diacyl-sn-glycero-3-phospho-L-serine(out) + ATP + H2O = a 1,2-diacyl-sn-glycero-3-phospho-L-serine(in) + ADP + phosphate + H(+). In terms of biological role, catalytic component of a P4-ATPase flippase complex which catalyzes the hydrolysis of ATP coupled to the transport of aminophospholipids from the outer to the inner leaflet of various membranes and ensures the maintenance of asymmetric distribution of phospholipids. Phospholipid translocation also seems to be implicated in vesicle formation and in uptake of lipid signaling molecules. May also participate in the establishment of the canalicular membrane integrity by ensuring asymmetric distribution of phospholipids in the canicular membrane. This chain is Phospholipid-transporting ATPase IC (atp8b1), found in Xenopus tropicalis (Western clawed frog).